A 698-amino-acid polypeptide reads, in one-letter code: Polyribonucleotide nucleotidyltransferase (698 aa).

D485 and D491 together coordinate Mg(2+). Positions P552–V612 constitute a KH domain. Residues G622–V690 enclose the S1 motif domain.

The protein belongs to the polyribonucleotide nucleotidyltransferase family. Mg(2+) is required as a cofactor.

The protein resides in the cytoplasm. It catalyses the reaction RNA(n+1) + phosphate = RNA(n) + a ribonucleoside 5'-diphosphate. Its function is as follows. Involved in mRNA degradation. Catalyzes the phosphorolysis of single-stranded polyribonucleotides processively in the 3'- to 5'-direction. This Treponema denticola (strain ATCC 35405 / DSM 14222 / CIP 103919 / JCM 8153 / KCTC 15104) protein is Polyribonucleotide nucleotidyltransferase.